The chain runs to 257 residues: Protein windbeutel (257 aa).

Residues 1–21 (MMHILVTLLLVAIHSIPTTWA) form the signal peptide. Positions 24-27 (CTGC) are CXXC motif. The short motif at 254-257 (KEEL) is the Prevents secretion from ER element.

Homodimer. Interacts with pip; the interaction is direct and does not require pip to be folded. As to expression, briefly expressed in the follicle cells of the ovary, at around the time when the dorsoventral axis of the egg chamber is first established.

Its subcellular location is the endoplasmic reticulum lumen. In terms of biological role, probable chaperone protein involved in dorsoventral axis patterning in early embryos. Probably acts by folding and targeting pipe (pip) into the Golgi. This is Protein windbeutel from Drosophila melanogaster (Fruit fly).